Consider the following 425-residue polypeptide: MSTPTRTKKLIVSPTSVRKRVQNQNLTNTTYSTNSNSSRYRDSEENFLNRQQQELKQLHDQQLYELQELQEQQINEIEELSKQRSNTRIRNVFKVLITILVGSIIYGTYTNQFQPNPIEPFHLTEPIGQTWLHSLKDISTNWYHIWSDSFKDLARIKPLSESQTMPAGHRLHEKQILEKTLRRHQQEQDNNNNNKKTIENQMERMKRTDLERAIKEKTFFLDPTHYVNEEMIKQEIERQLKPHPGAPTPYNKDVYNSQNIYYPSSDAIPMVREKIENLENKVLDSVDEAIYKFGQKSKELLHNIQEKKEQIKEKLNDEPSNIEKEFNSLIKEIEKANYNIFKDLKDNYGEPTIEKLNELRYKFNDAARESREVIKNKIESAQAIEQELAKNLKKPHADSNGHPKPYPHHHLLNQENQIDENLIIV.

3 N-linked (GlcNAc...) asparagine glycosylation sites follow: asparagine 25, asparagine 28, and asparagine 36. 3 coiled-coil regions span residues 41 to 91, 172 to 208, and 292 to 340; these read RDSE…RIRN, HEKQ…MKRT, and KFGQ…NYNI. The chain crosses the membrane as a helical span at residues 91–113; sequence NVFKVLITILVGSIIYGTYTNQF. The interval 393 to 413 is disordered; the sequence is KKPHADSNGHPKPYPHHHLLN.

It is found in the membrane. This Dictyostelium discoideum (Social amoeba) protein is SrfA-induced gene G protein (sigG).